The chain runs to 160 residues: Ribonuclease ARB_07070 (160 aa).

The signal sequence occupies residues 1–18 (MVSFKAILTLSLIGAAFA). A disordered region spans residues 26–51 (AEPVEDSGAVANSPEGSGMDLGGTDP). Glu103 serves as the catalytic Proton acceptor. His144 acts as the Proton donor in catalysis.

This sequence belongs to the ribonuclease U2 family.

The protein resides in the secreted. Its function is as follows. This purine-specific ribonuclease cleaves 28S RNA in eukaryotic ribosomes, inhibits protein synthesis, and shows antitumor activity. The polypeptide is Ribonuclease ARB_07070 (Arthroderma benhamiae (strain ATCC MYA-4681 / CBS 112371) (Trichophyton mentagrophytes)).